The following is a 268-amino-acid chain: Orotidine 5'-phosphate decarboxylase (268 aa).

Substrate contacts are provided by residues Asp-37, 59-61, 91-100, Tyr-217, and Arg-235; these read KTH and DRKFADIGNT. Catalysis depends on Lys-93, which acts as the Proton donor.

The protein belongs to the OMP decarboxylase family.

It carries out the reaction orotidine 5'-phosphate + H(+) = UMP + CO2. It functions in the pathway pyrimidine metabolism; UMP biosynthesis via de novo pathway; UMP from orotate: step 2/2. The polypeptide is Orotidine 5'-phosphate decarboxylase (URA4) (Maudiozyma exigua (Yeast)).